Here is a 104-residue protein sequence, read N- to C-terminus: Large ribosomal subunit protein uL24 (104 aa).

It belongs to the universal ribosomal protein uL24 family. As to quaternary structure, part of the 50S ribosomal subunit.

Its function is as follows. One of two assembly initiator proteins, it binds directly to the 5'-end of the 23S rRNA, where it nucleates assembly of the 50S subunit. In terms of biological role, one of the proteins that surrounds the polypeptide exit tunnel on the outside of the subunit. This Alteromonas mediterranea (strain DSM 17117 / CIP 110805 / LMG 28347 / Deep ecotype) protein is Large ribosomal subunit protein uL24.